We begin with the raw amino-acid sequence, 145 residues long: MKIKIQKIHPNALIPKYQTDGSSGFDLHAVEEVMIKPHSVGLVKIGICLSLEVGYELQVRTRSGLALNHQVMVLNSPGTVDNDYRGEIKVILANLSDKDFKVQVGDRIAQGVVQKTYKAEFIECEQLDETSRGSGGFGSTGVSKA.

Substrate contacts are provided by residues arginine 62–glycine 64, asparagine 75, threonine 79–aspartate 81, and lysine 89.

The protein belongs to the dUTPase family. Requires Mg(2+) as cofactor.

It catalyses the reaction dUTP + H2O = dUMP + diphosphate + H(+). The protein operates within pyrimidine metabolism; dUMP biosynthesis; dUMP from dCTP (dUTP route): step 2/2. This enzyme is involved in nucleotide metabolism: it produces dUMP, the immediate precursor of thymidine nucleotides and it decreases the intracellular concentration of dUTP so that uracil cannot be incorporated into DNA. The polypeptide is Deoxyuridine 5'-triphosphate nucleotidohydrolase (Helicobacter pylori (strain ATCC 700392 / 26695) (Campylobacter pylori)).